Consider the following 265-residue polypeptide: Capsule polysaccharide export inner-membrane protein BexB (265 aa).

The next 6 membrane-spanning stretches (helical) occupy residues 37-57, 64-84, 118-138, 151-171, 178-198, and 235-255; these read IGFF…VMMW, KFST…AMMW, LLEV…LVMI, LIAW…ICAI, FGKI…AFFF, and ESIG…LVMV. One can recognise an ABC transmembrane type-2 domain in the interval 37 to 258; the sequence is IGFFWLFVEP…LLGLVMVKNF (222 aa).

This sequence belongs to the ABC-2 integral membrane protein family.

The protein resides in the cell inner membrane. May form an ATP-driven capsule polysaccharide export apparatus, in association with the BexA, BexC and BexD proteins. The chain is Capsule polysaccharide export inner-membrane protein BexB (bexB) from Haemophilus influenzae.